The following is a 466-amino-acid chain: Ribulose bisphosphate carboxylase large chain (466 aa).

Lys5 is modified (N6,N6,N6-trimethyllysine). Residues Asn114 and Thr164 each coordinate substrate. Lys166 functions as the Proton acceptor in the catalytic mechanism. Lys168 lines the substrate pocket. Lys192, Asp194, and Glu195 together coordinate Mg(2+). Lys192 carries the N6-carboxylysine modification. The active-site Proton acceptor is His285. Residues Arg286, His318, and Ser370 each contribute to the substrate site.

Belongs to the RuBisCO large chain family. Type I subfamily. Heterohexadecamer of 8 large chains and 8 small chains; disulfide-linked. The disulfide link is formed within the large subunit homodimers. The cofactor is Mg(2+). Post-translationally, the disulfide bond which can form in the large chain dimeric partners within the hexadecamer appears to be associated with oxidative stress and protein turnover.

It is found in the plastid. The protein resides in the chloroplast. It carries out the reaction 2 (2R)-3-phosphoglycerate + 2 H(+) = D-ribulose 1,5-bisphosphate + CO2 + H2O. It catalyses the reaction D-ribulose 1,5-bisphosphate + O2 = 2-phosphoglycolate + (2R)-3-phosphoglycerate + 2 H(+). In terms of biological role, ruBisCO catalyzes two reactions: the carboxylation of D-ribulose 1,5-bisphosphate, the primary event in carbon dioxide fixation, as well as the oxidative fragmentation of the pentose substrate in the photorespiration process. Both reactions occur simultaneously and in competition at the same active site. The sequence is that of Ribulose bisphosphate carboxylase large chain from Adoxa moschatellina (Moschatel).